Consider the following 266-residue polypeptide: 4-hydroxy-tetrahydrodipicolinate reductase (266 aa).

10-15 provides a ligand contact to NAD(+); the sequence is GPRGRM. Position 38 (lysine 38) interacts with NADP(+). NAD(+)-binding positions include 99-101 and 125-128; these read GTT and APNF. Catalysis depends on histidine 155, which acts as the Proton donor/acceptor. Histidine 156 contacts (S)-2,3,4,5-tetrahydrodipicolinate. Lysine 159 serves as the catalytic Proton donor. Residue 165 to 166 coordinates (S)-2,3,4,5-tetrahydrodipicolinate; it reads GT.

This sequence belongs to the DapB family.

The protein resides in the cytoplasm. The catalysed reaction is (S)-2,3,4,5-tetrahydrodipicolinate + NAD(+) + H2O = (2S,4S)-4-hydroxy-2,3,4,5-tetrahydrodipicolinate + NADH + H(+). The enzyme catalyses (S)-2,3,4,5-tetrahydrodipicolinate + NADP(+) + H2O = (2S,4S)-4-hydroxy-2,3,4,5-tetrahydrodipicolinate + NADPH + H(+). It functions in the pathway amino-acid biosynthesis; L-lysine biosynthesis via DAP pathway; (S)-tetrahydrodipicolinate from L-aspartate: step 4/4. In terms of biological role, catalyzes the conversion of 4-hydroxy-tetrahydrodipicolinate (HTPA) to tetrahydrodipicolinate. This is 4-hydroxy-tetrahydrodipicolinate reductase from Bacillus cereus (strain ZK / E33L).